Consider the following 127-residue polypeptide: MATVSRKKKKVKVTPEGTVHIKASFNNIMVTITDVLGNTVSWSSAGKNGFKGSKKNTPYASQITSEAAAKEAFDLGMRHVNVLIKGPGAGRDAAIRALQGAGLEVRSIKDITPLPHNGCRPPKRRRV.

It belongs to the universal ribosomal protein uS11 family. In terms of assembly, part of the 30S ribosomal subunit. Interacts with proteins S7 and S18. Binds to IF-3.

In terms of biological role, located on the platform of the 30S subunit, it bridges several disparate RNA helices of the 16S rRNA. Forms part of the Shine-Dalgarno cleft in the 70S ribosome. This is Small ribosomal subunit protein uS11 from Chlorobium phaeobacteroides (strain DSM 266 / SMG 266 / 2430).